Reading from the N-terminus, the 154-residue chain is Cyanate hydratase (154 aa).

Active-site residues include R100, E103, and S126.

It belongs to the cyanase family.

It catalyses the reaction cyanate + hydrogencarbonate + 3 H(+) = NH4(+) + 2 CO2. Its function is as follows. Catalyzes the reaction of cyanate with bicarbonate to produce ammonia and carbon dioxide. In Aspergillus fumigatus (strain CBS 144.89 / FGSC A1163 / CEA10) (Neosartorya fumigata), this protein is Cyanate hydratase.